Reading from the N-terminus, the 442-residue chain is MREIVHIQGGQCGNQIGAKFWEVISDEHGIDPTGTYHGDSDLQLERINVYYNEATGGRYVPRAILMDLEPGTMDSVRAGPFGQLFRPDNFVFGQTGAGNNWAKGHYTEGAELIDSVLDVVRKEAEGCDCLQGFQITHSLGGGTGSGMGTLLISKVREEYPDRIMETFSVVPSPKVSDTVVEPYNATLSVHQLVENADECMVIDNEALYDICFRTLKLTTPTYGDLNHLVSAAMSGVTCCLRFPGQLNSDLRKLAVNLIPFPRLHFFMIGFAPLTSRGSQQYRALTVPELTQQMFDAKNMMCAADPRHGRYLTASALFRGRMSTKEVDEQMLNVQNKNSSYFVEWIPNNIKSSICDIPPKGLKMAVTFVGNSTAIQEMFKRVAEQFTAMFRRKAFLHWYTGEGMDEMEFTEAESNMNDLVSEYQQYQDATAEEEGEFEEEGEQ.

GTP-binding residues include Gln11, Glu69, Ser138, Gly142, Thr143, Gly144, Asn204, and Asn226. Residue Glu69 participates in Mg(2+) binding.

The protein belongs to the tubulin family. Dimer of alpha and beta chains. A typical microtubule is a hollow water-filled tube with an outer diameter of 25 nm and an inner diameter of 15 nM. Alpha-beta heterodimers associate head-to-tail to form protofilaments running lengthwise along the microtubule wall with the beta-tubulin subunit facing the microtubule plus end conferring a structural polarity. Microtubules usually have 13 protofilaments but different protofilament numbers can be found in some organisms and specialized cells. The cofactor is Mg(2+).

It is found in the cytoplasm. The protein resides in the cytoskeleton. Functionally, tubulin is the major constituent of microtubules, a cylinder consisting of laterally associated linear protofilaments composed of alpha- and beta-tubulin heterodimers. Microtubules grow by the addition of GTP-tubulin dimers to the microtubule end, where a stabilizing cap forms. Below the cap, tubulin dimers are in GDP-bound state, owing to GTPase activity of alpha-tubulin. In Paramecium tetraurelia, this protein is Tubulin beta chain (bPT2).